Consider the following 436-residue polypeptide: Glutamyl-tRNA reductase (436 aa).

Substrate is bound by residues 49 to 52 (TCNR), Ser109, 114 to 116 (EGQ), and Gln120. Cys50 (nucleophile) is an active-site residue. Position 198-203 (198-203 (GAGRMS)) interacts with NADP(+).

The protein belongs to the glutamyl-tRNA reductase family. Homodimer.

It catalyses the reaction (S)-4-amino-5-oxopentanoate + tRNA(Glu) + NADP(+) = L-glutamyl-tRNA(Glu) + NADPH + H(+). It participates in porphyrin-containing compound metabolism; protoporphyrin-IX biosynthesis; 5-aminolevulinate from L-glutamyl-tRNA(Glu): step 1/2. It functions in the pathway porphyrin-containing compound metabolism; chlorophyll biosynthesis. Functionally, catalyzes the NADPH-dependent reduction of glutamyl-tRNA(Glu) to glutamate 1-semialdehyde (GSA). The sequence is that of Glutamyl-tRNA reductase from Prochlorococcus marinus (strain MIT 9301).